The primary structure comprises 384 residues: S-adenosylmethionine synthase (384 aa).

An ATP-binding site is contributed by histidine 15. Aspartate 17 contributes to the Mg(2+) binding site. K(+) is bound at residue glutamate 43. Positions 56 and 99 each coordinate L-methionine. Residues 99-109 (QSPDINQGVDR) are flexible loop. Residues 164-166 (DAK), 230-231 (RF), aspartate 239, 245-246 (RK), alanine 262, and lysine 266 contribute to the ATP site. Position 239 (aspartate 239) interacts with L-methionine. Residue lysine 270 coordinates L-methionine.

It belongs to the AdoMet synthase family. In terms of assembly, homotetramer; dimer of dimers. Requires Mg(2+) as cofactor. It depends on K(+) as a cofactor.

Its subcellular location is the cytoplasm. It catalyses the reaction L-methionine + ATP + H2O = S-adenosyl-L-methionine + phosphate + diphosphate. The protein operates within amino-acid biosynthesis; S-adenosyl-L-methionine biosynthesis; S-adenosyl-L-methionine from L-methionine: step 1/1. Its function is as follows. Catalyzes the formation of S-adenosylmethionine (AdoMet) from methionine and ATP. The overall synthetic reaction is composed of two sequential steps, AdoMet formation and the subsequent tripolyphosphate hydrolysis which occurs prior to release of AdoMet from the enzyme. The sequence is that of S-adenosylmethionine synthase from Enterobacter sp. (strain 638).